Consider the following 1387-residue polypeptide: Dicer-like protein 2-1 (1387 aa).

One can recognise a Helicase ATP-binding domain in the interval Met26–Ala205. An ATP-binding site is contributed by Met39–Thr46. The DEAH box signature appears at Asp146–His149. Positions Lys370–Arg535 constitute a Helicase C-terminal domain. Positions Ala565–Lys659 constitute a Dicer dsRNA-binding fold domain. 2 RNase III domains span residues Ala915–Gly1055 and Asp1094–His1277. Glu1133, Asp1263, and Glu1266 together coordinate Mg(2+).

This sequence belongs to the helicase family. Dicer subfamily. It depends on Mg(2+) as a cofactor. Mn(2+) is required as a cofactor.

Its function is as follows. Dicer-like endonuclease involved in cleaving double-stranded RNA in the RNA interference (RNAi) pathway. Produces 21 to 25 bp dsRNAs (siRNAs) which target the selective destruction of homologous RNAs leading to sequence-specific suppression of gene expression, called post-transcriptional gene silencing (PTGS). Part of a broad host defense response against viral infection and transposons. The chain is Dicer-like protein 2-1 (dcl2-1) from Aspergillus niger (strain ATCC MYA-4892 / CBS 513.88 / FGSC A1513).